A 586-amino-acid polypeptide reads, in one-letter code: Glutamine--tRNA ligase (586 aa).

Positions P58–H68 match the 'HIGH' region motif. Residues E59–N61 and H65–S71 each bind ATP. D91 and Y240 together coordinate L-glutamine. ATP-binding positions include T259 and R294 to L295. The 'KMSKS' region motif lies at V301–R305.

The protein belongs to the class-I aminoacyl-tRNA synthetase family. As to quaternary structure, monomer.

The protein localises to the cytoplasm. It carries out the reaction tRNA(Gln) + L-glutamine + ATP = L-glutaminyl-tRNA(Gln) + AMP + diphosphate. This is Glutamine--tRNA ligase from Bordetella avium (strain 197N).